Here is an 868-residue protein sequence, read N- to C-terminus: Rifampicin phosphotransferase (868 aa).

The ATP-binding stretch occupies residues 5–317; that stretch reads TERYVLDLQE…FHIVQSRPIT (313 aa). The ATP site is built by Lys-26, Arg-120, Gly-135, Thr-139, Gln-186, Glu-300, Gln-312, and Arg-314. The interval 330–755 is rifampicin-binding; that stretch reads NHVYVSVGHQ…TSDGEALTGA (426 aa). A disordered region spans residues 410–430; sequence FVPSLPDAPPAGPRAGAAPEP. A swivel phosphohistidine region spans residues 768 to 866; it reads GLPVSTGTVE…VHGTDGYIEI (99 aa). His-826 (tele-phosphohistidine intermediate) is an active-site residue.

It belongs to the rifampicin phosphotransferase family.

The catalysed reaction is rifampicin + ATP + H2O = 21-phosphorifampicin + AMP + phosphate + 2 H(+). Catalyzes the phosphorylation of rifampicin, also known as rifampin (RIF), leading to its inactivation. Confers high level resistance to a variety of clinically used rifamycin antibiotics. Does not show phosphoenolpyruvate (PEP) synthase activity. The protein is Rifampicin phosphotransferase of Streptomyces sviceus (strain ATCC 29083 / DSM 924 / JCM 4929 / NBRC 13980 / NCIMB 11184 / NRRL 5439 / UC 5370).